The sequence spans 376 residues: TelA-like protein SERP0976 (376 aa).

Belongs to the TelA family.

The chain is TelA-like protein SERP0976 from Staphylococcus epidermidis (strain ATCC 35984 / DSM 28319 / BCRC 17069 / CCUG 31568 / BM 3577 / RP62A).